The primary structure comprises 172 residues: uncharacterized protein (172 aa).

Transmembrane regions (helical) follow at residues 46–66, 76–96, 104–124, and 129–149; these read MFSI…FLYP, LLSL…VGLF, WKFL…LGWS, and FFYA…FTEI.

Its subcellular location is the endoplasmic reticulum membrane. This is an uncharacterized protein from Schizosaccharomyces pombe (strain 972 / ATCC 24843) (Fission yeast).